A 498-amino-acid chain; its full sequence is Lycopene beta cyclase, chloroplastic/chromoplastic (498 aa).

The N-terminal 79 residues, 1 to 79 (MDTLLRTPNN…ELPMYDPSKG (79 aa)), are a transit peptide targeting the chloroplast and chromoplast. 84-112 (LAVVGGGPAGLAVAQQVSEAGLSVCSIDP) serves as a coordination point for NAD(+). The FLEET motif signature appears at 293–297 (FLEET).

This sequence belongs to the lycopene cyclase family. Monomer. It depends on FAD as a cofactor. The cofactor is NADPH.

The protein localises to the plastid. Its subcellular location is the chloroplast. It localises to the chromoplast. It carries out the reaction a carotenoid psi-end group = a carotenoid beta-end derivative. The enzyme catalyses all-trans-lycopene = gamma-carotene. The catalysed reaction is gamma-carotene = all-trans-beta-carotene. It catalyses the reaction all-trans-neurosporene = beta-zeacarotene. It carries out the reaction beta-zeacarotene = 7,8-dihydro-beta-carotene. It participates in carotenoid biosynthesis; beta-carotene biosynthesis. Its pathway is carotenoid biosynthesis; beta-zeacarotene biosynthesis. Functionally, catalyzes the double cyclization reaction which converts lycopene to beta-carotene. Catalyzes the double cyclization reaction which converts neurosporene to 7,8-dihydro-beta-carotene. The polypeptide is Lycopene beta cyclase, chloroplastic/chromoplastic (Capsicum annuum (Capsicum pepper)).